Consider the following 986-residue polypeptide: E3 ubiquitin-protein ligase Arkadia (986 aa).

Residues K19, K28, K34, K47, K59, K73, K87, K96, and K110 each participate in a glycyl lysine isopeptide (Lys-Gly) (interchain with G-Cter in SUMO2) cross-link. Basic and acidic residues predominate over residues 66–89; sequence HLCDDSQKQEKDMNGNQQEQEKSL. The tract at residues 66 to 106 is disordered; sequence HLCDDSQKQEKDMNGNQQEQEKSLVVRKKRKSQQAGPSYVQ. The interval 120–191 is disordered; the sequence is QHLGTPSDED…HKWPRTETES (72 aa). The span at 132 to 151 shows a compositional bias: low complexity; sequence SSFSDCLSSPSSSLHFGDSD. A compositionally biased stretch (polar residues) spans 164–173; it reads RHSQTILNAK. Residue K173 forms a Glycyl lysine isopeptide (Lys-Gly) (interchain with G-Cter in SUMO2) linkage. Residues 174 to 184 show a composition bias toward basic residues; sequence SRSHSARSHKW. Glycyl lysine isopeptide (Lys-Gly) (interchain with G-Cter in SUMO2) cross-links involve residues K198 and K218. An interaction with AXIN1 region spans residues 241-404; that stretch reads VLARRKYALL…VPTTSARMES (164 aa). The tract at residues 248–277 is disordered; it reads ALLPSSSSSSENDLSSESSSSSSTEGEEDL. The segment covering 252 to 271 has biased composition (low complexity); that stretch reads SSSSSSENDLSSESSSSSST. The SUMO interaction motif 1 (SIM) motif lies at 300-304; that stretch reads VVVIE. The SUMO interaction motif 2 (SIM) signature appears at 325 to 331; that stretch reads EVEIVTV. The disordered stretch occupies residues 337 to 373; that stretch reads SRSTLGHSRSHWSQGSSSHASRPQEPRNRSRISTVIQ. A compositionally biased stretch (low complexity) spans 347-357; the sequence is HWSQGSSSHAS. The short motif at 382-386 is the SUMO interaction motif 3 (SIM) element; it reads VVDLT. Disordered regions lie at residues 389 to 471, 506 to 561, 610 to 646, 659 to 684, and 696 to 719; these read EDEP…ETGP, QQHG…SYHE, APSQ…RHYM, HQAS…VDYV, and ISSH…TAAP. Over residues 395-466 the composition is skewed to polar residues; the sequence is VPTTSARMES…DSRRTTSSAV (72 aa). Over residues 508-522 the composition is skewed to basic residues; sequence HGHHFQHHHHHHHTP. Positions 551 to 561 are enriched in polar residues; sequence ANSSSGTSYHE. A compositionally biased stretch (pro residues) spans 670–680; it reads NPPPQTQPPPQ. Positions 907 to 909 are ubiquitin binding; it reads YPH. Residues K915 and K919 each participate in a glycyl lysine isopeptide (Lys-Gly) (interchain with G-Cter in SUMO2) cross-link. Zn(2+) is bound by residues C934 and C937. The RING-type; atypical zinc-finger motif lies at 934–975; sequence CTICLSILEEGEDVRRLPCMHLFHQVCVDQWLITNKKCPICR. A ubiquitin binding region spans residues 949-953; sequence RLPCM. Positions 957 and 960 each coordinate Zn(2+).

It belongs to the Arkadia family. In terms of assembly, monomer. Interacts with SMAD6, SMAD7, AXIN1, AXIN2 and SKIL isoform SNON. Interacts with (phosphorylated) SMAD2 and SMAD3. Part of a complex containing RNF111, AXIN1 and SMAD7. Interacts (via SIM domains) with SUMO1 and SUMO2.

The protein resides in the nucleus. It is found in the cytoplasm. Its subcellular location is the PML body. It carries out the reaction S-ubiquitinyl-[E2 ubiquitin-conjugating enzyme]-L-cysteine + [acceptor protein]-L-lysine = [E2 ubiquitin-conjugating enzyme]-L-cysteine + N(6)-ubiquitinyl-[acceptor protein]-L-lysine.. The protein operates within protein modification; protein ubiquitination. Its activity is regulated as follows. Binds free ubiquitin non-covalently via its RING-type zinc finger. Ubiquitin-binding leads to enhance the E3 ubiquitin-protein ligase activity by stabilizing the ubiquitin-conjugating enzyme E2 (donor ubiquitin) in the 'closed' conformation and activating ubiquitin transfer. Functionally, E3 ubiquitin-protein ligase. Required for mesoderm patterning during embryonic development. Acts as an enhancer of the transcriptional responses of the SMAD2/SMAD3 effectors, which are activated downstream of BMP. Acts by mediating ubiquitination and degradation of SMAD inhibitors such as SMAD7, inducing their proteasomal degradation and thereby enhancing the transcriptional activity of TGF-beta and BMP. In addition to enhance transcription of SMAD2/SMAD3 effectors, also regulates their turnover by mediating their ubiquitination and subsequent degradation, coupling their activation with degradation, thereby ensuring that only effectors 'in use' are degraded. Activates SMAD3/SMAD4-dependent transcription by triggering signal-induced degradation of SNON isoform of SKIL. Associates with UBE2D2 as an E2 enzyme. Specifically binds polysumoylated chains via SUMO interaction motifs (SIMs) and mediates ubiquitination of sumoylated substrates. Catalyzes 'Lys-63'-linked ubiquitination of sumoylated XPC in response to UV irradiation, promoting nucleotide excision repair. Mediates ubiquitination and degradation of sumoylated PML. The regulation of the BMP-SMAD signaling is however independent of sumoylation and is not dependent of SUMO interaction motifs (SIMs). The polypeptide is E3 ubiquitin-protein ligase Arkadia (RNF111) (Pongo abelii (Sumatran orangutan)).